A 602-amino-acid chain; its full sequence is MLPVQTSQLAAAFTDAVRALAPADANLPAVTFERPKAAAHGDLACNIAMQVAKSLKTNPRELAQKVVDAVKADSRATALVAALEIAGPGFINLRLSPEARAEVLRAVLADGDRYGARPVGEHGQVLVEFVSANPTGPLHVGHGRQAALGDALANLLAWQGWSVHREFYYNDAGVQIHTLAISVQARARGLKPGDAGWPESAYNGDYIADIAADFLAGKTVSASDGEPVTASGNIEDLESIRKFAVTYLRNEQDIDLQAFGVKFDRYYLESSLYSDGRVEAAVQSLIAKGKTYESEGALWLRTTDDGDDKDRVMKKGDGTYTYFVPDVAYHTTKWERGFSKVINVQGSDHHGTIARVRAGLQGLDIGIPQGYPDYVLHKMVTVMKNGEEVKISKRAGSYVTVRDLIEWSNGGEETIRGCLEAGVADWPAHFTRGRDAVRFFLLSRKADTEFVFDVDLALKQNDENPVYYVQYAHARICSIFEAWGGADWEARLGELASVDLAAVTAADVSPQAIALGRRLAEFPDMLAAASSELAPHAVAFYLRDLAGDFHAFYNADRVLVDDETVKRARLALLAATRQVLKNGLAVIGVSAPQRMDREAAPA.

The 'HIGH' region signature appears at 132–142 (ANPTGPLHVGH).

Belongs to the class-I aminoacyl-tRNA synthetase family. Monomer.

Its subcellular location is the cytoplasm. It catalyses the reaction tRNA(Arg) + L-arginine + ATP = L-arginyl-tRNA(Arg) + AMP + diphosphate. The protein is Arginine--tRNA ligase of Cupriavidus metallidurans (strain ATCC 43123 / DSM 2839 / NBRC 102507 / CH34) (Ralstonia metallidurans).